The sequence spans 211 residues: Metalloproteinase inhibitor 3 (211 aa).

The N-terminal stretch at 1-23 (MTPWLGLVVLLGSWSLGDWGAEA) is a signal peptide. Cys24 contributes to the Zn(2+) binding site. Involved in metalloproteinase-binding regions lie at residues 24 to 27 (CTCS) and 88 to 89 (ES). Cystine bridges form between Cys24–Cys91, Cys26–Cys118, Cys36–Cys143, Cys145–Cys192, Cys150–Cys155, and Cys163–Cys184. The region spanning 24–143 (CTCSPSHPQD…GLNYRYHLGC (120 aa)) is the NTR domain. Positions 105–188 (TGRVYDGKMY…SKHYACIRQK (84 aa)) are mediates interaction with EFEMP1. Asn207 carries an N-linked (GlcNAc...) asparagine glycan.

It belongs to the protease inhibitor I35 (TIMP) family. In terms of assembly, interacts with EFEMP1. Interacts with KDR.

The protein resides in the secreted. Its subcellular location is the extracellular space. It localises to the extracellular matrix. Functionally, mediates a variety of processes including matrix regulation and turnover, inflammation, and angiogenesis, through reversible inhibition of zinc protease superfamily enzymes, primarily matrix metalloproteinases (MMPs). Regulates extracellular matrix (ECM) remodeling through inhibition of matrix metalloproteinases (MMP) including MMP-1, MMP-2, MMP-3, MMP-7, MMP-9, MMP-13, MMP-14 and MMP-15. Additionally, modulates the processing of amyloid precursor protein (APP) and apolipoprotein E receptor ApoER2 by inhibiting two alpha-secretases ADAM10 and ADAM17. Functions as a tumor suppressor and a potent inhibitor of angiogenesis. Exerts its anti-angiogenic effect by directly interacting with vascular endothelial growth factor (VEGF) receptor-2/KDR, preventing its binding to the VEGFA ligand. Selectively induces apoptosis in angiogenic endothelial cells through a caspase-independent cell death pathway. Mechanistically, inhibits matrix-induced focal adhesion kinase PTK2 tyrosine phosphorylation and association with paxillin/PXN and disrupts the incorporation of ITGB3, PTK2 and PXN into focal adhesion contacts on the matrix. This chain is Metalloproteinase inhibitor 3 (TIMP3), found in Bos taurus (Bovine).